A 294-amino-acid polypeptide reads, in one-letter code: tRNA-cytidine(32) 2-sulfurtransferase (294 aa).

Residues 70–75 carry the PP-loop motif motif; it reads SGGKDS. [4Fe-4S] cluster-binding residues include C145, C148, and C236.

It belongs to the TtcA family. As to quaternary structure, homodimer. The cofactor is Mg(2+). [4Fe-4S] cluster serves as cofactor.

The protein resides in the cytoplasm. The enzyme catalyses cytidine(32) in tRNA + S-sulfanyl-L-cysteinyl-[cysteine desulfurase] + AH2 + ATP = 2-thiocytidine(32) in tRNA + L-cysteinyl-[cysteine desulfurase] + A + AMP + diphosphate + H(+). It participates in tRNA modification. Catalyzes the ATP-dependent 2-thiolation of cytidine in position 32 of tRNA, to form 2-thiocytidine (s(2)C32). The sulfur atoms are provided by the cysteine/cysteine desulfurase (IscS) system. The protein is tRNA-cytidine(32) 2-sulfurtransferase of Rhizobium meliloti (strain 1021) (Ensifer meliloti).